A 456-amino-acid chain; its full sequence is Phosphomethylpyrimidine synthase (456 aa).

Substrate contacts are provided by residues Asn-80, Met-109, Tyr-139, His-175, 195-197 (SRG), 236-239 (DSLR), and Glu-275. His-279 contacts Zn(2+). Tyr-302 lines the substrate pocket. His-343 contacts Zn(2+). Residues Cys-423, Cys-426, and Cys-431 each coordinate [4Fe-4S] cluster.

It belongs to the ThiC family. Requires [4Fe-4S] cluster as cofactor.

The enzyme catalyses 5-amino-1-(5-phospho-beta-D-ribosyl)imidazole + S-adenosyl-L-methionine = 4-amino-2-methyl-5-(phosphooxymethyl)pyrimidine + CO + 5'-deoxyadenosine + formate + L-methionine + 3 H(+). The protein operates within cofactor biosynthesis; thiamine diphosphate biosynthesis. In terms of biological role, catalyzes the synthesis of the hydroxymethylpyrimidine phosphate (HMP-P) moiety of thiamine from aminoimidazole ribotide (AIR) in a radical S-adenosyl-L-methionine (SAM)-dependent reaction. This chain is Phosphomethylpyrimidine synthase, found in Synechococcus sp. (strain ATCC 27144 / PCC 6301 / SAUG 1402/1) (Anacystis nidulans).